The sequence spans 2278 residues: Protein Ycf2 (2278 aa).

1632-1639 lines the ATP pocket; sequence GSIGTGRS.

Belongs to the Ycf2 family.

The protein localises to the plastid. Its subcellular location is the chloroplast stroma. Probable ATPase of unknown function. Its presence in a non-photosynthetic plant (Epifagus virginiana) and experiments in tobacco indicate that it has an essential function which is probably not related to photosynthesis. The chain is Protein Ycf2 from Solanum bulbocastanum (Wild potato).